The following is a 161-amino-acid chain: Regulator of ribonuclease activity A (161 aa).

It belongs to the RraA family. As to quaternary structure, homotrimer. Binds to both RNA-binding sites in the C-terminal region of Rne and to RhlB.

The protein resides in the cytoplasm. Globally modulates RNA abundance by binding to RNase E (Rne) and regulating its endonucleolytic activity. Can modulate Rne action in a substrate-dependent manner by altering the composition of the degradosome. Modulates RNA-binding and helicase activities of the degradosome. The polypeptide is Regulator of ribonuclease activity A (Tolumonas auensis (strain DSM 9187 / NBRC 110442 / TA 4)).